The primary structure comprises 318 residues: Chlorophyllase-2 (318 aa).

The short motif at Gly-136 to Gly-140 is the GXSXG element. Ser-138 functions as the Nucleophile in the catalytic mechanism. Catalysis depends on charge relay system residues Asp-167 and His-244.

It belongs to the AB hydrolase superfamily. Lipase family. As to expression, expressed in leaves, flowers and flower buds, but not in roots.

Its subcellular location is the cytoplasm. The protein localises to the cytosol. The catalysed reaction is a chlorophyll + H2O = a chlorophyllide + phytol + H(+). It carries out the reaction chlorophyll a + H2O = phytol + chlorophyllide a + H(+). It participates in porphyrin-containing compound metabolism; chlorophyll degradation. In terms of biological role, catalyzes the hydrolysis of ester bond in chlorophyll to yield chlorophyllide and phytol. Does not seem to be required for chlorophyll degradation during senescence. The polypeptide is Chlorophyllase-2 (Arabidopsis thaliana (Mouse-ear cress)).